Here is a 308-residue protein sequence, read N- to C-terminus: Testis-specific Y-encoded protein 8 (308 aa).

This sequence belongs to the nucleosome assembly protein (NAP) family.

It localises to the cytoplasm. The protein localises to the nucleus. In terms of biological role, may be involved in sperm differentiation and proliferation. This Homo sapiens (Human) protein is Testis-specific Y-encoded protein 8 (TSPY8).